Consider the following 304-residue polypeptide: Dihydroorotate dehydrogenase B (NAD(+)), catalytic subunit (304 aa).

FMN is bound by residues S20 and 44-45; that span reads KA. Substrate contacts are provided by residues K44 and 68–72; that span reads NAIGL. N98 and N126 together coordinate FMN. A substrate-binding site is contributed by N126. The active-site Nucleophile is C129. Positions 164 and 190 each coordinate FMN. Residue 191-192 coordinates substrate; it reads NT. FMN is bound by residues G216, 242–243, and 264–265; these read GG and GT.

It belongs to the dihydroorotate dehydrogenase family. Type 1 subfamily. In terms of assembly, heterotetramer of 2 PyrK and 2 PyrD type B subunits. FMN is required as a cofactor.

It is found in the cytoplasm. It carries out the reaction (S)-dihydroorotate + NAD(+) = orotate + NADH + H(+). The protein operates within pyrimidine metabolism; UMP biosynthesis via de novo pathway; orotate from (S)-dihydroorotate (NAD(+) route): step 1/1. Functionally, catalyzes the conversion of dihydroorotate to orotate with NAD(+) as electron acceptor. In Oceanobacillus iheyensis (strain DSM 14371 / CIP 107618 / JCM 11309 / KCTC 3954 / HTE831), this protein is Dihydroorotate dehydrogenase B (NAD(+)), catalytic subunit (pyrD).